The primary structure comprises 1201 residues: Potassium channel subfamily T member 1 (1201 aa).

Positions 1–28 are disordered; it reads MARAKLKNSPSESNSHVKTVPPATTEDV. Topologically, residues 1-92 are cytoplasmic; it reads MARAKLKNSP…FFIKNQRSSL (92 aa). Polar residues predominate over residues 8 to 17; sequence NSPSESNSHV. Residues 93 to 115 traverse the membrane as a helical segment; it reads RIRLFNFSLKLLTCLLYIVRVLL. Residues 116-152 lie on the Extracellular side of the membrane; that stretch reads DNPEEGIGCWECEKQNYTLFNQSTKINWSHIFWVDRK. N-linked (GlcNAc...) asparagine glycans are attached at residues N131 and N136. The helical transmembrane segment at 153–175 threads the bilayer; it reads LPLWAVQVSIALISFLETMLLIY. Residues 176-184 are Cytoplasmic-facing; it reads LSYKGNIWE. A helical transmembrane segment spans residues 185–206; that stretch reads QIFRISFILEMINTVPFIITIF. Residues 207–216 lie on the Extracellular side of the membrane; the sequence is WPPLRNLFIP. The chain crosses the membrane as a helical span at residues 217 to 229; that stretch reads VFLNCWLAKYALE. Over 230–249 the chain is Cytoplasmic; the sequence is NMINDLHRAIQRTQSAMFNQ. Residues 250-272 form a helical membrane-spanning segment; the sequence is VLILICTLLCLVFTGTCGIQHLE. The Extracellular portion of the chain corresponds to 273–279; that stretch reads RAGEKLS. An intramembrane region (pore-forming) is located at residues 280–300; sequence LFKSFYFCIVTFSTVGYGDVT. K(+)-binding residues include V294 and G295. Topologically, residues 301–304 are extracellular; it reads PKIW. Residues 305 to 326 traverse the membrane as a helical segment; the sequence is PSQLLVVIMICVALVVLPLQFE. Residues 327-1201 lie on the Cytoplasmic side of the membrane; sequence ELVYLWMERQ…NPETRDETQL (875 aa). One can recognise an RCK N-terminal 1 domain in the interval 350–486; the sequence is EKHVVLCVSS…FHVKFADHVV (137 aa). L511, H514, S536, and N538 together coordinate Na(+). The Zn(2+) site is built by C750 and C751. K(+) is bound by residues R753 and K756. Positions 753 and 756 each coordinate Na(+). The Zn(2+) site is built by C758 and H760. K(+)-binding residues include N761, Y769, and G770. F771 is a Na(+) binding site. One can recognise an RCK N-terminal 2 domain in the interval 773-913; the sequence is NKLIIVSAET…QFRAKDSYSL (141 aa). S779, L810, D812, G834, and D857 together coordinate K(+). Residues 1175-1201 form a disordered region; that stretch reads NDGHSRKSSCSNKLGPCNPETRDETQL.

Belongs to the potassium channel family. Calcium-activated (TC 1.A.1.3) subfamily. KCa4.1/KCNT1 sub-subfamily. In terms of assembly, homotetramer; which constitutes the Na(+)-activated K(+) channel. Interacts with KCNT2; these heterodimer channels differ from the homomers in their unitary conductance, kinetic behavior, subcellular localization, and response to activation of protein kinase C. Post-translationally, phosphorylated by protein kinase C. Phosphorylation of the C-terminal domain increases channel activity.

Its subcellular location is the cell membrane. The enzyme catalyses K(+)(in) = K(+)(out). With respect to regulation, activated by high intracellular Na(+). In addition to activation by Na(+), is cooperatively activated by intracellular Cl(-) levels. Inhibited by Zn(2+). Activated upon stimulation of G-protein coupled receptors, such as CHRM1 and GRIA1. Sodium-activated K(+) channel. Acts as an important mediator of neuronal membrane excitability. Contributes to the delayed outward currents. Regulates of neuronal bursting in sensory neurons. Contributes to synaptic development and plasticity. In Gallus gallus (Chicken), this protein is Potassium channel subfamily T member 1 (KCNT1).